Consider the following 290-residue polypeptide: Acetyl-coenzyme A carboxylase carboxyl transferase subunit beta (290 aa).

The 264-residue stretch at 27–290 folds into the CoA carboxyltransferase N-terminal domain; that stretch reads LWHKCPSCEA…FTHSPSPVSA (264 aa). Positions 31, 34, 50, and 53 each coordinate Zn(2+). The C4-type zinc finger occupies 31-53; the sequence is CPSCEAVLYRPELEKTLDVCPKC.

It belongs to the AccD/PCCB family. In terms of assembly, acetyl-CoA carboxylase is a heterohexamer composed of biotin carboxyl carrier protein (AccB), biotin carboxylase (AccC) and two subunits each of ACCase subunit alpha (AccA) and ACCase subunit beta (AccD). Zn(2+) serves as cofactor.

The protein resides in the cytoplasm. The catalysed reaction is N(6)-carboxybiotinyl-L-lysyl-[protein] + acetyl-CoA = N(6)-biotinyl-L-lysyl-[protein] + malonyl-CoA. It functions in the pathway lipid metabolism; malonyl-CoA biosynthesis; malonyl-CoA from acetyl-CoA: step 1/1. Its function is as follows. Component of the acetyl coenzyme A carboxylase (ACC) complex. Biotin carboxylase (BC) catalyzes the carboxylation of biotin on its carrier protein (BCCP) and then the CO(2) group is transferred by the transcarboxylase to acetyl-CoA to form malonyl-CoA. The protein is Acetyl-coenzyme A carboxylase carboxyl transferase subunit beta of Pseudomonas aeruginosa (strain UCBPP-PA14).